A 1235-amino-acid polypeptide reads, in one-letter code: ATP-dependent helicase/nuclease subunit A (1235 aa).

A UvrD-like helicase ATP-binding domain is found at Arg-4–Met-470. Ala-25–Thr-32 is a binding site for ATP. A UvrD-like helicase C-terminal domain is found at Gln-501–Gly-795.

It belongs to the helicase family. AddA subfamily. In terms of assembly, heterodimer of AddA and AddB/RexB. Mg(2+) serves as cofactor.

It carries out the reaction Couples ATP hydrolysis with the unwinding of duplex DNA by translocating in the 3'-5' direction.. The catalysed reaction is ATP + H2O = ADP + phosphate + H(+). Its function is as follows. The heterodimer acts as both an ATP-dependent DNA helicase and an ATP-dependent, dual-direction single-stranded exonuclease. Recognizes the chi site generating a DNA molecule suitable for the initiation of homologous recombination. The AddA nuclease domain is required for chi fragment generation; this subunit has the helicase and 3' -&gt; 5' nuclease activities. This is ATP-dependent helicase/nuclease subunit A from Pediococcus pentosaceus (strain ATCC 25745 / CCUG 21536 / LMG 10740 / 183-1w).